A 146-amino-acid chain; its full sequence is MAECDWDTVTVLRKKGSAAQSKSKQAVTAAQRKGEAVETSKKWAAGQNKQHVVTKNTAKLDRETEELSHQRVPLEVGKVIQQGRQNKGLTQKDLATKINEKPQIIAEYECGKAIPNNQVMGKIERAIGLKLRGKDIGLPLEACSKK.

Residues 13–53 (RKKGSAAQSKSKQAVTAAQRKGEAVETSKKWAAGQNKQHVV) form a disordered region. Over residues 17 to 31 (SAAQSKSKQAVTAAQ) the composition is skewed to low complexity. Basic and acidic residues predominate over residues 32–41 (RKGEAVETSK). The HTH cro/C1-type domain maps to 80–134 (IQQGRQNKGLTQKDLATKINEKPQIIAEYECGKAIPNNQVMGKIERAIGLKLRGK). The H-T-H motif DNA-binding region spans 91-110 (QKDLATKINEKPQIIAEYEC).

It localises to the nucleus. Its function is as follows. Probable transcriptional coactivator. This Danio rerio (Zebrafish) protein is Endothelial differentiation-related factor 1 homolog (edf1).